The chain runs to 617 residues: Dihydroxy-acid dehydratase (617 aa).

D81 provides a ligand contact to Mg(2+). C122 contacts [2Fe-2S] cluster. The Mg(2+) site is built by D123 and K124. Residue K124 is modified to N6-carboxylysine. C195 contacts [2Fe-2S] cluster. E491 serves as a coordination point for Mg(2+). S517 acts as the Proton acceptor in catalysis.

Belongs to the IlvD/Edd family. As to quaternary structure, homodimer. The cofactor is [2Fe-2S] cluster. Mg(2+) serves as cofactor.

The enzyme catalyses (2R)-2,3-dihydroxy-3-methylbutanoate = 3-methyl-2-oxobutanoate + H2O. It catalyses the reaction (2R,3R)-2,3-dihydroxy-3-methylpentanoate = (S)-3-methyl-2-oxopentanoate + H2O. The protein operates within amino-acid biosynthesis; L-isoleucine biosynthesis; L-isoleucine from 2-oxobutanoate: step 3/4. Its pathway is amino-acid biosynthesis; L-valine biosynthesis; L-valine from pyruvate: step 3/4. Functions in the biosynthesis of branched-chain amino acids. Catalyzes the dehydration of (2R,3R)-2,3-dihydroxy-3-methylpentanoate (2,3-dihydroxy-3-methylvalerate) into 2-oxo-3-methylpentanoate (2-oxo-3-methylvalerate) and of (2R)-2,3-dihydroxy-3-methylbutanoate (2,3-dihydroxyisovalerate) into 2-oxo-3-methylbutanoate (2-oxoisovalerate), the penultimate precursor to L-isoleucine and L-valine, respectively. The polypeptide is Dihydroxy-acid dehydratase (Hydrogenovibrio crunogenus (strain DSM 25203 / XCL-2) (Thiomicrospira crunogena)).